A 107-amino-acid polypeptide reads, in one-letter code: uncharacterized protein (107 aa).

Residues 23–64 (SASSSSSTRIPSGFASATSSKSNSSTKSSPSPINSFNNKTNN) are disordered. Positions 37-57 (ASATSSKSNSSTKSSPSPINS) are enriched in low complexity. Residues 76–98 (LAFGIVEFMVFNGMISTITTTTF) form a helical membrane-spanning segment.

Its subcellular location is the membrane. This is an uncharacterized protein from Dictyostelium discoideum (Social amoeba).